The following is a 122-amino-acid chain: Small ribosomal subunit protein uS13 (122 aa).

The disordered stretch occupies residues 99–122 (RGQRTHTNARTRKGPAKAIAGKKK).

This sequence belongs to the universal ribosomal protein uS13 family. Part of the 30S ribosomal subunit. Forms a loose heterodimer with protein S19. Forms two bridges to the 50S subunit in the 70S ribosome.

Functionally, located at the top of the head of the 30S subunit, it contacts several helices of the 16S rRNA. In the 70S ribosome it contacts the 23S rRNA (bridge B1a) and protein L5 of the 50S subunit (bridge B1b), connecting the 2 subunits; these bridges are implicated in subunit movement. Contacts the tRNAs in the A and P-sites. This chain is Small ribosomal subunit protein uS13, found in Cereibacter sphaeroides (strain ATCC 17025 / ATH 2.4.3) (Rhodobacter sphaeroides).